The following is a 347-amino-acid chain: NADH-ubiquinone oxidoreductase chain 2 (347 aa).

11 consecutive transmembrane segments (helical) span residues 3-23, 25-45, 59-79, 96-116, 122-142, 149-169, 178-198, 201-221, 237-257, 274-294, and 325-345; these read PPIF…VMTS, HWML…PILM, YFLT…INLL, ILMT…FWVP, IPLS…LSVL, INPN…GWGG, ILAY…LYNP, MILN…LFML, MPLI…LPPL, EMII…YFYM, and FLPP…MISI.

The protein belongs to the complex I subunit 2 family. In terms of assembly, core subunit of respiratory chain NADH dehydrogenase (Complex I) which is composed of 45 different subunits. Interacts with TMEM242.

It localises to the mitochondrion inner membrane. It carries out the reaction a ubiquinone + NADH + 5 H(+)(in) = a ubiquinol + NAD(+) + 4 H(+)(out). In terms of biological role, core subunit of the mitochondrial membrane respiratory chain NADH dehydrogenase (Complex I) which catalyzes electron transfer from NADH through the respiratory chain, using ubiquinone as an electron acceptor. Essential for the catalytic activity and assembly of complex I. This is NADH-ubiquinone oxidoreductase chain 2 from Genetta servalina (Servaline genet).